A 167-amino-acid polypeptide reads, in one-letter code: Ribosome maturation factor RimM (167 aa).

One can recognise a PRC barrel domain in the interval 93-165; sequence KGVYYDFQLI…QVIIDPIPGL (73 aa).

It belongs to the RimM family. As to quaternary structure, binds ribosomal protein uS19.

It localises to the cytoplasm. In terms of biological role, an accessory protein needed during the final step in the assembly of 30S ribosomal subunit, possibly for assembly of the head region. Essential for efficient processing of 16S rRNA. May be needed both before and after RbfA during the maturation of 16S rRNA. It has affinity for free ribosomal 30S subunits but not for 70S ribosomes. The protein is Ribosome maturation factor RimM of Dehalococcoides mccartyi (strain ATCC BAA-2266 / KCTC 15142 / 195) (Dehalococcoides ethenogenes (strain 195)).